The chain runs to 332 residues: 3-ketodihydrosphingosine reductase (332 aa).

Positions 1–25 are cleaved as a signal peptide; it reads MLLLAAAGLVAFVLLLYMVSPLISP. The Cytoplasmic segment spans residues 26–270; sequence KPLALPGAHV…GNFNSSIGSD (245 aa). Residues Gly39, Ser41, Ser42, Gly43, Arg64, Lys68, and Asp93 each coordinate NADPH. The short motif at 39–43 is the GXSXG element; the sequence is GGSSG. Ser172 acts as the Proton donor in catalysis. Residue Tyr186 is the Proton acceptor of the active site. 2 residues coordinate NADP(+): Tyr186 and Lys190. Lys190 serves as the catalytic Lowers pKa of active site Tyr. A helical membrane pass occupies residues 271–291; sequence GYMLSSLTCGMAPVTSITEGL. The Lumenal portion of the chain corresponds to 292 to 293; that stretch reads QQ. Residues 294-314 form a helical membrane-spanning segment; it reads VVTMGLFRTIALFYLGSFDNI. Residues 315-332 are Cytoplasmic-facing; that stretch reads VRRCMVQKAKPEVVDKTA.

The protein belongs to the short-chain dehydrogenases/reductases (SDR) family.

Its subcellular location is the endoplasmic reticulum membrane. It carries out the reaction sphinganine + NADP(+) = 3-oxosphinganine + NADPH + H(+). Its pathway is lipid metabolism; sphingolipid metabolism. Catalyzes the reduction of 3'-oxosphinganine (3-ketodihydrosphingosine/KDS) to sphinganine (dihydrosphingosine/DHS), the second step of de novo sphingolipid biosynthesis. In Mus musculus (Mouse), this protein is 3-ketodihydrosphingosine reductase (Kdsr).